Consider the following 122-residue polypeptide: Large ribosomal subunit protein uL14 (122 aa).

This sequence belongs to the universal ribosomal protein uL14 family. In terms of assembly, part of the 50S ribosomal subunit. Forms a cluster with proteins L3 and L19. In the 70S ribosome, L14 and L19 interact and together make contacts with the 16S rRNA in bridges B5 and B8.

Functionally, binds to 23S rRNA. Forms part of two intersubunit bridges in the 70S ribosome. The protein is Large ribosomal subunit protein uL14 of Thiobacillus denitrificans (strain ATCC 25259 / T1).